Here is a 1110-residue protein sequence, read N- to C-terminus: Serine/threonine-protein kinase PknK (1110 aa).

The 258-residue stretch at 26-283 (FDNVEEIGRG…TAADVGEELR (258 aa)) folds into the Protein kinase domain. ATP-binding positions include 32–40 (IGRGGFGVV) and Lys55. Arg148 serves as the catalytic Proton acceptor. 2 residues coordinate Mg(2+): Asn154 and Asp167. The segment at 308–343 (RSPEAHAAHRHTGGGTPTVPTPPTPATKYRPSVPTG) is disordered.

Belongs to the protein kinase superfamily. Ser/Thr protein kinase family.

It carries out the reaction L-seryl-[protein] + ATP = O-phospho-L-seryl-[protein] + ADP + H(+). It catalyses the reaction L-threonyl-[protein] + ATP = O-phospho-L-threonyl-[protein] + ADP + H(+). The protein is Serine/threonine-protein kinase PknK (pknK) of Mycobacterium bovis (strain ATCC BAA-935 / AF2122/97).